Consider the following 700-residue polypeptide: MSQNQVPKWIQLNNEIMIQKDGKFQFDKDKEAVHSYFVDYINQNTVFFHNLKEKLDYLVENQYYEEEFLSLYSFEDIKEVFKTAYAKKFRFPSFMSAFKFYNDYALKTNDKKKILERYEDRISIVALFFANGDTEKAKEYVNLMINQEYQPSTPTFLNAGRKRRGELVSCFLLEVNDSLNDISRAIDISMQLSKLGGGVSLNLSKLRAKGEAIKDVENATKGVVGVMKLLDNAFRYADQMGQRQGSGAAYLNIFHRDINDFLDTKKISADEDVRVKTLSIGVVIPDKFVELAREDKAAYVFYPHTIYKEYGQHMDEMDMNEMYDKFVDNPRVKKEKINPRKLLEKLAMLRSESGYPYIMFQDNVNKVHANNHISKVKFSNLCSEVLQASQVSSYTDYDEEDEIGLDISCNLGSLNILNVMEHKSIEKTVKLATDSLTHVSETTDIRNAPAVRRANKAMKSIGLGAMNLHGYLAQNGIAYESPEARDFANTFFMMVNFYSIQRSAEIAKEKGETFDQYEGSTYATGEYFDKYVSTDFSPKYEKIANLFEGMHIPTTEDWKKLKAFVAEHGMYHSYRLCIAPTGSISYVQSSTASVMPIMERIEERTYGNSKTYYPMPGLASNNWFFYKEAYDMDMFKVVDMIATIQQHIDQGISFTLFLKDTMTTRDLNRIDLYAHHRGIKTIYYARTKDTGQDSCLSCVV.

Substrate-binding positions include Thr153, Ser169–Cys170, Gly198, Asn380–Glu384, and Pro580–Ile584. The cysteines at positions 170 and 409 are disulfide-linked. Asn380 acts as the Proton acceptor in catalysis. The active-site Cysteine radical intermediate is Cys382. Glu384 acts as the Proton acceptor in catalysis.

It belongs to the ribonucleoside diphosphate reductase large chain family. As to quaternary structure, tetramer of two alpha and two beta subunits.

The enzyme catalyses a 2'-deoxyribonucleoside 5'-diphosphate + [thioredoxin]-disulfide + H2O = a ribonucleoside 5'-diphosphate + [thioredoxin]-dithiol. Under complex allosteric control mediated by deoxynucleoside triphosphates and ATP binding. The type of nucleotide bound at the specificity site determines substrate preference. It seems probable that ATP makes the enzyme reduce CDP and UDP, dGTP favors ADP reduction and dTTP favors GDP reduction. Its function is as follows. Provides the precursors necessary for DNA synthesis. Catalyzes the biosynthesis of deoxyribonucleotides from the corresponding ribonucleotides. The polypeptide is Ribonucleoside-diphosphate reductase subunit alpha (Bacillus subtilis (strain 168)).